The sequence spans 468 residues: Probable ubiquitin carboxyl-terminal hydrolase R319 (468 aa).

In terms of domain architecture, USP spans 42 to 462 (TGIMNLGNTC…NAYILFYIRS (421 aa)). Catalysis depends on Cys-51, which acts as the Nucleophile. His-420 acts as the Proton acceptor in catalysis.

This sequence belongs to the peptidase C19 family.

It carries out the reaction Thiol-dependent hydrolysis of ester, thioester, amide, peptide and isopeptide bonds formed by the C-terminal Gly of ubiquitin (a 76-residue protein attached to proteins as an intracellular targeting signal).. In Acanthamoeba polyphaga (Amoeba), this protein is Probable ubiquitin carboxyl-terminal hydrolase R319.